Reading from the N-terminus, the 201-residue chain is Peptidyl-prolyl cis-trans isomerase FKBP11 (201 aa).

The first 27 residues, 1–27, serve as a signal peptide directing secretion; sequence MTLSPLLLPLQLLLLLLFSGAVCRAEA. The PPIase FKBP-type domain maps to 57 to 144; sequence GDTLHIHYTG…QYDVELIALI (88 aa). Residues 156-176 traverse the membrane as a helical segment; it reads ILPLVGIAMVPALLGLIGYHL.

It belongs to the FKBP-type PPIase family. In terms of assembly, interacts with IFITM5.

It is found in the membrane. The catalysed reaction is [protein]-peptidylproline (omega=180) = [protein]-peptidylproline (omega=0). Its function is as follows. PPIases accelerate the folding of proteins during protein synthesis. The protein is Peptidyl-prolyl cis-trans isomerase FKBP11 (Fkbp11) of Mus musculus (Mouse).